The chain runs to 483 residues: 6-phosphogluconate dehydrogenase, decarboxylating (483 aa).

NADP(+) contacts are provided by residues Gly10–Gly15 and Asn33–Thr35. At Lys38 the chain carries N6-acetyllysine. Position 57 is a phosphoserine (Ser57). An N6-acetyllysine modification is found at Lys59. NADP(+) is bound by residues Val75 to Ala77 and Asn103. Residues Asn103 and Ser129–Gly131 contribute to the substrate site. Residue Ser129 is modified to Phosphoserine. The active-site Proton acceptor is the Lys184. His187–Asn188 serves as a coordination point for substrate. Glu191 (proton donor) is an active-site residue. 5 residues coordinate substrate: Tyr192, Lys261, Arg288, Arg447, and His453. NADP(+) is bound at residue Ser478–Tyr481.

It belongs to the 6-phosphogluconate dehydrogenase family. In terms of assembly, homodimer.

Its subcellular location is the cytoplasm. The catalysed reaction is 6-phospho-D-gluconate + NADP(+) = D-ribulose 5-phosphate + CO2 + NADPH. It functions in the pathway carbohydrate degradation; pentose phosphate pathway; D-ribulose 5-phosphate from D-glucose 6-phosphate (oxidative stage): step 3/3. In terms of biological role, catalyzes the oxidative decarboxylation of 6-phosphogluconate to ribulose 5-phosphate and CO(2), with concomitant reduction of NADP to NADPH. The chain is 6-phosphogluconate dehydrogenase, decarboxylating from Rattus norvegicus (Rat).